Reading from the N-terminus, the 304-residue chain is Dihydroorotate dehydrogenase B (NAD(+)), catalytic subunit (304 aa).

Residues Ser21 and 45 to 46 (KA) contribute to the FMN site. Substrate-binding positions include Lys45 and 69-73 (NAIGL). Residues Asn99 and Asn127 each contribute to the FMN site. Position 127 (Asn127) interacts with substrate. Cys130 (nucleophile) is an active-site residue. 2 residues coordinate FMN: Lys165 and Ile191. Residue 192–193 (NT) participates in substrate binding. Residues Gly217, 243–244 (GG), and 265–266 (GT) contribute to the FMN site.

This sequence belongs to the dihydroorotate dehydrogenase family. Type 1 subfamily. As to quaternary structure, heterotetramer of 2 PyrK and 2 PyrD type B subunits. It depends on FMN as a cofactor.

It localises to the cytoplasm. It catalyses the reaction (S)-dihydroorotate + NAD(+) = orotate + NADH + H(+). It participates in pyrimidine metabolism; UMP biosynthesis via de novo pathway; orotate from (S)-dihydroorotate (NAD(+) route): step 1/1. Catalyzes the conversion of dihydroorotate to orotate with NAD(+) as electron acceptor. The sequence is that of Dihydroorotate dehydrogenase B (NAD(+)), catalytic subunit (pyrD) from Listeria welshimeri serovar 6b (strain ATCC 35897 / DSM 20650 / CCUG 15529 / CIP 8149 / NCTC 11857 / SLCC 5334 / V8).